A 414-amino-acid chain; its full sequence is Tyrosine--tRNA ligase (414 aa).

Residue Tyr40 coordinates L-tyrosine. The 'HIGH' region signature appears at 45-54 (ATAASLHVGH). Positions 175 and 179 each coordinate L-tyrosine. Positions 235 to 239 (KMGKS) match the 'KMSKS' region motif. Residue Lys238 participates in ATP binding. The S4 RNA-binding domain occupies 349-414 (LTVVQLLAQT…KKKHRMVQLG (66 aa)).

This sequence belongs to the class-I aminoacyl-tRNA synthetase family. TyrS type 1 subfamily. In terms of assembly, homodimer.

It is found in the cytoplasm. It catalyses the reaction tRNA(Tyr) + L-tyrosine + ATP = L-tyrosyl-tRNA(Tyr) + AMP + diphosphate + H(+). In terms of biological role, catalyzes the attachment of tyrosine to tRNA(Tyr) in a two-step reaction: tyrosine is first activated by ATP to form Tyr-AMP and then transferred to the acceptor end of tRNA(Tyr). This Paracoccus denitrificans (strain Pd 1222) protein is Tyrosine--tRNA ligase.